A 55-amino-acid polypeptide reads, in one-letter code: MAKGVREKIKLVSSAGTGHFYTTTKNKRTKPEKMELKKFDPVVRQHVIYKEAKIK.

The protein belongs to the bacterial ribosomal protein bL33 family.

The sequence is that of Large ribosomal subunit protein bL33 from Sodalis glossinidius (strain morsitans).